Here is a 325-residue protein sequence, read N- to C-terminus: uncharacterized protein (325 aa).

Residues 1–75 are disordered; sequence MSQPPEHPGN…PPPGYPTHLQ (75 aa). A compositionally biased stretch (pro residues) spans 24–70; the sequence is YPPPGYGAPPPPPGYGPPPGTYLPPGYNAPPPPPGYGPPPGPPPPGY. Helical transmembrane passes span 96-116, 153-173, 205-225, and 273-293; these read AVTL…VIGA, IVMF…HAGI, LLIV…GLIF, and LVGE…AALI.

It to M.tuberculosis Rv2560.

The protein resides in the cell membrane. This is an uncharacterized protein from Mycobacterium bovis (strain ATCC BAA-935 / AF2122/97).